A 542-amino-acid polypeptide reads, in one-letter code: LysM domain-containing protein ARB_00327 (542 aa).

Residues 1 to 35 (MLSSVLFPAMRTLLLLKYVFSLISLSAICCQTVSA) form the signal peptide. Residues N218, N298, N381, and N415 are each glycosylated (N-linked (GlcNAc...) asparagine). Positions 264 to 310 (RWYGVKKGDYCNLIVLKFGITMDNFIFLNPALNSNCTNLYAEESYCV) constitute a LysM 1 domain. The disordered stretch occupies residues 439-484 (DSDEPTPTTPITTSDDPTSTSATPTTPTTSSKPSPGAPTMTGQPSA). Positions 443 to 472 (PTPTTPITTSDDPTSTSATPTTPTTSSKPS) are enriched in low complexity. The LysM 2 domain occupies 487–534 (KWHTVTNGESCTVIPKTFGITLEQFLAWNPTVKSDCTENFWAGYAYCV).

The protein resides in the secreted. Functionally, might have a role in sequestration of chitin oligosaccharides (breakdown products of fungal cell walls that are released during invasion and act as triggers of host immunity) to dampen host defense. In Arthroderma benhamiae (strain ATCC MYA-4681 / CBS 112371) (Trichophyton mentagrophytes), this protein is LysM domain-containing protein ARB_00327.